We begin with the raw amino-acid sequence, 228 residues long: 5'-methylthioadenosine/S-adenosylhomocysteine nucleosidase (228 aa).

Glu11 (proton acceptor) is an active-site residue. Residues Gly77, Ile151, and 172–173 (ME) each bind substrate. Residue Asp196 is the Proton donor of the active site.

The protein belongs to the PNP/UDP phosphorylase family. MtnN subfamily.

The catalysed reaction is S-adenosyl-L-homocysteine + H2O = S-(5-deoxy-D-ribos-5-yl)-L-homocysteine + adenine. It carries out the reaction S-methyl-5'-thioadenosine + H2O = 5-(methylsulfanyl)-D-ribose + adenine. The enzyme catalyses 5'-deoxyadenosine + H2O = 5-deoxy-D-ribose + adenine. The protein operates within amino-acid biosynthesis; L-methionine biosynthesis via salvage pathway; S-methyl-5-thio-alpha-D-ribose 1-phosphate from S-methyl-5'-thioadenosine (hydrolase route): step 1/2. Functionally, catalyzes the irreversible cleavage of the glycosidic bond in both 5'-methylthioadenosine (MTA) and S-adenosylhomocysteine (SAH/AdoHcy) to adenine and the corresponding thioribose, 5'-methylthioribose and S-ribosylhomocysteine, respectively. Also cleaves 5'-deoxyadenosine, a toxic by-product of radical S-adenosylmethionine (SAM) enzymes, into 5-deoxyribose and adenine. This chain is 5'-methylthioadenosine/S-adenosylhomocysteine nucleosidase, found in Staphylococcus aureus (strain MRSA252).